An 84-amino-acid polypeptide reads, in one-letter code: Small ribosomal subunit protein bS20 (84 aa).

It belongs to the bacterial ribosomal protein bS20 family.

Functionally, binds directly to 16S ribosomal RNA. This is Small ribosomal subunit protein bS20 from Bacteroides thetaiotaomicron (strain ATCC 29148 / DSM 2079 / JCM 5827 / CCUG 10774 / NCTC 10582 / VPI-5482 / E50).